Consider the following 125-residue polypeptide: Subtelomeric hrmA-associated cluster protein cgnA (125 aa).

G-Q-I/R/S repeat units follow at residues 11 to 13 (GQI), 14 to 16 (GPI), 17 to 19 (GQR), 20 to 22 (GQS), 23 to 25 (GQR), 26 to 28 (GQS), 29 to 31 (GQR), 32 to 34 (GQS), 35 to 37 (GQI), 38 to 40 (GQS), 41 to 43 (GQS), 44 to 46 (GQS), 47 to 49 (GQS), 50 to 52 (GQS), 53 to 55 (GQI), 56 to 58 (GQI), 59 to 61 (GQI), 62 to 64 (GQI), 65 to 67 (GQI), 68 to 70 (GQI), 71 to 73 (GQI), 74 to 76 (GQI), and 77 to 79 (GQA). The 23 X 3 AA approximate tandem repeats of G-Q-I/R/S stretch occupies residues 11 to 79 (GQIGPIGQRG…IGQIGQIGQA (69 aa)). The disordered stretch occupies residues 15-57 (PIGQRGQSGQRGQSGQRGQSGQIGQSGQSGQSGQSGQSGQIGQ).

Its subcellular location is the secreted. Its function is as follows. Hypoxia responsive morphology factor that modulates the expression of the subtelomeric hrmA-associated cluster (HAC) containing genes that alter the hyphal surface (such as reduced total chitin or increased beta-glucan exposure) and perturb inter-hyphal interactions within the developing biofilms, resulting in a loss of vertically aligned polarized growing filaments. Consequently, this hypoxia-typic morphotype (called H-MORPH) with altered biofilm architecture leads to increased hypoxia fitness, increased host inflammation, rapid disease progression, and mortality in a murine model of invasive aspergillosis. GcnA is directly involved in the reduction total surface chitin and the increase beta-glucan exposure, and mediates the detachment of the extracellular matrix and especially of its component galactosaminogalactan (GAG). This is Subtelomeric hrmA-associated cluster protein cgnA from Aspergillus fumigatus (strain CBS 144.89 / FGSC A1163 / CEA10) (Neosartorya fumigata).